The following is a 279-amino-acid chain: Acetylglutamate kinase (279 aa).

Substrate contacts are provided by residues 62 to 63, R84, and N177; that span reads GG.

It belongs to the acetylglutamate kinase family. ArgB subfamily.

Its subcellular location is the cytoplasm. The enzyme catalyses N-acetyl-L-glutamate + ATP = N-acetyl-L-glutamyl 5-phosphate + ADP. The protein operates within amino-acid biosynthesis; L-arginine biosynthesis; N(2)-acetyl-L-ornithine from L-glutamate: step 2/4. Its function is as follows. Catalyzes the ATP-dependent phosphorylation of N-acetyl-L-glutamate. This is Acetylglutamate kinase from Pseudothermotoga lettingae (strain ATCC BAA-301 / DSM 14385 / NBRC 107922 / TMO) (Thermotoga lettingae).